The chain runs to 858 residues: DNA mismatch repair protein MutS (858 aa).

613–620 (GPNMAGKS) is a binding site for ATP.

The protein belongs to the DNA mismatch repair MutS family.

Functionally, this protein is involved in the repair of mismatches in DNA. It is possible that it carries out the mismatch recognition step. This protein has a weak ATPase activity. This is DNA mismatch repair protein MutS from Dehalococcoides mccartyi (strain CBDB1).